The following is an 817-amino-acid chain: Dual specificity tyrosine-phosphorylation-regulated kinase mbk-2 (817 aa).

Disordered stretches follow at residues 1–46 (MAAL…HECP), 70–148 (PTSF…GPLG), 186–206 (GSYE…GSQQ), and 301–396 (LPNV…FRPE). Positions 7-25 (FTRNSRSYGQQPIDVTQQG) are enriched in polar residues. Low complexity-rich tracts occupy residues 70-81 (PTSFSGASSSSS) and 97-111 (NLLG…SNSL). 2 stretches are compositionally biased toward polar residues: residues 122 to 143 (SGNT…TNNL) and 193 to 206 (GQAQ…GSQQ). The segment covering 303-318 (NVGTSSSNGSSNSSSG) has biased composition (low complexity). A compositionally biased stretch (polar residues) spans 327–351 (LMTQSIGGPNKHLSASHSTLNTAST). S362 is subject to Phosphoserine; by cdk-1. The span at 364-392 (SNESLSRSHTSSSGGSQGGHNSNSGSNSG) shows a compositional bias: low complexity. Positions 461-774 (YEVLKVIGKG…PAQALKHKWL (314 aa)) constitute a Protein kinase domain. ATP is bound by residues 467–475 (IGKGSFGQV) and K490. D587 (proton acceptor) is an active-site residue. Y621 carries the post-translational modification Phosphotyrosine; by autocatalysis.

This sequence belongs to the protein kinase superfamily. CMGC Ser/Thr protein kinase family. MNB/DYRK subfamily. Part of a complex, consisting of pseudophosphatases egg-3, egg-4, egg-5 and kinase mbk-2; this complex is required for the oocyte-to-zygote transition. Interacts (via Tyr-619 and Tyr-621) with egg-4 (via tyrosine-protein phosphatase domain) and egg-5 (via tyrosine-protein phosphatase domain); mbk-2 tyrosine phosphorylation enhances the interaction. The interaction inhibits mbk-2 kinase activity and is required for mbk-2 oocyte cortex localization. Interacts (via N-terminus) with egg-3 (via tyrosine-protein phosphatase domain); the interaction does not affect mbk-2 kinase activity, is enhanced by mbk-2 tyrosine phosphorylation status and requires prior binding of mbk-2 to egg-4 and egg-5. Mg(2+) is required as a cofactor. Autophosphorylated. In terms of tissue distribution, in L1 larvae, expressed widely in the nervous system, including head neurons and the ventral nerve cord. In adult animals, continues to be expressed in the nervous system and is also expressed in body wall muscle.

It localises to the cytoplasm. The protein resides in the cell cortex. The catalysed reaction is L-seryl-[protein] + ATP = O-phospho-L-seryl-[protein] + ADP + H(+). It carries out the reaction L-threonyl-[protein] + ATP = O-phospho-L-threonyl-[protein] + ADP + H(+). It catalyses the reaction L-tyrosyl-[protein] + ATP = O-phospho-L-tyrosyl-[protein] + ADP + H(+). Its activity is regulated as follows. Activated during oocyte maturation by phosphorylation on Ser-362 by cdk-1. The pseudotyrosine phosphatases egg-4 and egg-5 sequester activated mbk-2 until the meiotic divisions and inhibit mbk-2 kinase activity directly, using a mixed-inhibition mechanism that does not involve tyrosine dephosphorylation. Its function is as follows. Required for oocyte-to-zygote transition in which it phosphorylates oocyte proteins, including mei-1, oma-1, oma-2, mex-5, and mex-6, modifying their activity and/or stability following meiosis. Through phosphorylation of P granule components including meg-1, promotes the disassembly of zygotic P granules in the anterior cytoplasm during zygote polarization, and thus plays a role in P granule distribution and segregation in early stage embryos following meiosis. Functions in both spindle positioning and in the posterior localization of cytoplasmic determinants, including pie-1, pos-1, and pgl-1, in early embryos. Involved in the asymmetric distribution of plk-1 at the 2-cell embryonic stage. This is Dual specificity tyrosine-phosphorylation-regulated kinase mbk-2 from Caenorhabditis elegans.